The primary structure comprises 794 residues: MASGASRYRLSCSLPGHELDVRGLVCCLYPPGAFVSVSRDRTTRLWAPDSPNRGFTEMHCMSGHSNFVSCVCIIPSSDIYPHGLIATGGNDHNICIFSLDSPMPLYILKGHKDTVCSLSSGKFGTLLSGSWDTTAKVWLNDKCMMTLQGHTAAVWAVKILPEQGLMLTGSADKTIKLWKAGRCERTFLGHEDCVRGLAILSETEFLSCANDASIRRWQITGECLEVYFGHTNYIYSISVFPNSKDFVTTAEDRSLRIWKHGECAQTIRLPAQSIWCCCVLENGDIVVGASDGIIRVFTESEERTASAEEIKAFERELSQATIDSKTGDLGDINAEQLPGREHLSEPGTREGQTRLIRDGERVEAYQWSVSDGRWIKIGDVVGSSGANQQTSGKVLYEGKEFDYVFSIDVNEGGPSYKLPYNVSDDPWLVAYNFLQKNDLNPMFLDQVAKFIIDNTKGQTLGLGNTSFSDPFTGGGRYVPGTSGPSNTVQTADPFTGAGRYMPGSAGMDTTMTGVDPFTGNSAYRSAASKTVNIYFPKKEALTFDQANPTQILGKLKELNGTAPEEKKLTEDDLVLLEKILSLICNNSSEKPTAQQLQILWKAINWPEDIVFPALDILRLSIKHPNVNENFCNEKGDQFSSHLINLLNPKGKPANQLLALRTFCNCFVSQAGQKLMMSQRESLMSHAIELKSGSNKNIHIALATLTLNYSVCFHKDHNIEGKAQCLSVISTILEVVQDLEATFRLLVALGTLISDDSNAIQLAKSLGVDSQIKKYVSVSEPAKVSECCRLVLHLL.

WD repeat units lie at residues 17-56 (HELDVRGLVCCLYPPGAFVSVSRDRTTRLWAPDSPNRGFT), 63-107 (GHSN…PLYI), 110-148 (GHKDTVCSLSSGKFGTLLSGSWDTTAKVWLNDKCMMTLQ), 149-188 (GHTAAVWAVKILPEQGLMLTGSADKTIKLWKAGRCERTFL), 190-227 (HEDCVRGLAILSETEFLSCANDASIRRWQITGECLEVY), 229-268 (GHTNYIYSISVFPNSKDFVTTAEDRSLRIWKHGECAQTIR), and 270-307 (PAQSIWCCCVLENGDIVVGASDGIIRVFTESEERTASA). Phosphoserine is present on Ser-50. The PFU domain occupies 366-465 (QWSVSDGRWI…KGQTLGLGNT (100 aa)). An N6-acetyllysine modification is found at Lys-529. The PUL domain maps to 533 to 793 (IYFPKKEALT…SECCRLVLHL (261 aa)). ARM repeat units lie at residues 546–588 (ANPT…NNSS), 589–620 (EKPTAQQLQILWKAINWPEDIVFPALDILRLS), 621–668 (IKHP…CFVS), 669–714 (QAGQ…CFHK), 715–754 (DHNIEGKAQCLSVISTILEVVQDLEATFRLLVALGTLISD), and 755–794 (DSNAIQLAKSLGVDSQIKKYVSVSEPAKVSECCRLVLHLL).

The protein belongs to the WD repeat PLAP family. In terms of assembly, interacts with ubiquitin. Interacts with UBXN6, VCP and YOD1; may form a complex involved in macroautophagy. In terms of tissue distribution, expressed in the brain, with highest levels in hippocampal neurons, cerebellar granular cell layer and Purkinje cells.

Its subcellular location is the nucleus. It localises to the cytoplasm. It is found in the synapse. Its function is as follows. Plays a role in protein ubiquitination, sorting and degradation through its association with VCP. Involved in ubiquitin-mediated membrane proteins trafficking to late endosomes in an ESCRT-dependent manner, and hence plays a role in synaptic vesicle recycling. May play a role in macroautophagy, regulating for instance the clearance of damaged lysosomes. Plays a role in cerebellar Purkinje cell development. Positively regulates cytosolic and calcium-independent phospholipase A2 activities in a tumor necrosis factor alpha (TNF-alpha)- or lipopolysaccharide (LPS)-dependent manner, and hence prostaglandin E2 biosynthesis. In Mus musculus (Mouse), this protein is Phospholipase A-2-activating protein (Plaa).